The sequence spans 820 residues: MNISYNWLKEYVNFDLTPDEVAAALTSIGLETGGVEEVQTIKGGLEGLVIGEVLTCVEHPNSDHLHITTVNLGNGEPTQIVCGAPNVAAGQKVVVATLGTKLYDGDECFTIKKSKIRGVESIGMICAEDEIGIGTSHDGIIVLPEDAVPGTLAKDYYNVKSDYVLEVDITPNRADACSHYGVARDLYAYLVQNGKQAALTRPSVDAFAVENHDLDIKVTVENSEACPRYAGVTVKGVTVKESPEWLQNKLRIIGLRPINNVVDITNYIVHAFGQPLHCFDANKIKGGEVIVKTMPEGTTFVTLDGVERKLNERDLMICNKEDAMCIAGVFGGLDSGSTEATTDVFLESAYFHPTWVRKTARRHGLNTDASFRFERGIDPNITIYCLKLAAMMVKELAGGTISSEIKDVCAAPAQDFIVELTYEKVHSLIGKVIPAETIKSIVTSLEMKIMDETAEGLTLAVPPYRVDVQRDCDVIEDILRIYGYNNVEIPSTLKSSLTTKGDCDKSNKLQNLVAEQLVGCGFNEILNNSLTRAAYYDGLESYPSKNLVMLLNPLSADLNCMRQTLLFGGLESIAHNANRKNADLKFFEFGNCYHFDAEKKNPEKVLAPYSEDYHLGLWVTGKMVSNSWAHADENTSVYELKAYVENIFKRLGLDLHSLVVGNLSDDIYSTALTVNTKGGKRLATFGVVTKKMLKAFDVDNEVYYADLNWKELMKAIRSVKVSYKEISKFPAVKRDLALLLDKKVQFAEIEKIAYETEKKLLKEVSLFDVYEGKNLEAGKKSYAVSFLLQDESQTLNDKMIDKIMSKLVKNLEDKLGAKLR.

A tRNA-binding domain is found at 42–154 (KGGLEGLVIG…EDAVPGTLAK (113 aa)). One can recognise a B5 domain in the interval 413 to 489 (AQDFIVELTY…RIYGYNNVEI (77 aa)). Mg(2+) is bound by residues Asp467, Asp473, Glu476, and Asp477. Positions 727 to 820 (SKFPAVKRDL…LEDKLGAKLR (94 aa)) constitute an FDX-ACB domain.

It belongs to the phenylalanyl-tRNA synthetase beta subunit family. Type 1 subfamily. Tetramer of two alpha and two beta subunits. The cofactor is Mg(2+).

Its subcellular location is the cytoplasm. It carries out the reaction tRNA(Phe) + L-phenylalanine + ATP = L-phenylalanyl-tRNA(Phe) + AMP + diphosphate + H(+). The polypeptide is Phenylalanine--tRNA ligase beta subunit (Bacteroides fragilis (strain YCH46)).